Reading from the N-terminus, the 348-residue chain is D-alanine--D-alanine ligase (348 aa).

The ATP-grasp domain occupies 132–334 (KRVLESAGIP…YSDLIEELVS (203 aa)). 162-217 (LETLSFPIFVKPANMGSSVGISKAESIEGLREAIALALKYDSRILIEQGVVAREIE) contributes to the ATP binding site. Mg(2+) contacts are provided by aspartate 288, glutamate 301, and asparagine 303.

Belongs to the D-alanine--D-alanine ligase family. The cofactor is Mg(2+). Mn(2+) serves as cofactor.

The protein resides in the cytoplasm. The catalysed reaction is 2 D-alanine + ATP = D-alanyl-D-alanine + ADP + phosphate + H(+). Its pathway is cell wall biogenesis; peptidoglycan biosynthesis. In terms of biological role, cell wall formation. The polypeptide is D-alanine--D-alanine ligase (Streptococcus uberis (strain ATCC BAA-854 / 0140J)).